A 180-amino-acid polypeptide reads, in one-letter code: ATP synthase subunit delta (180 aa).

Belongs to the ATPase delta chain family. In terms of assembly, F-type ATPases have 2 components, F(1) - the catalytic core - and F(0) - the membrane proton channel. F(1) has five subunits: alpha(3), beta(3), gamma(1), delta(1), epsilon(1). F(0) has three main subunits: a(1), b(2) and c(10-14). The alpha and beta chains form an alternating ring which encloses part of the gamma chain. F(1) is attached to F(0) by a central stalk formed by the gamma and epsilon chains, while a peripheral stalk is formed by the delta and b chains.

Its subcellular location is the cell membrane. F(1)F(0) ATP synthase produces ATP from ADP in the presence of a proton or sodium gradient. F-type ATPases consist of two structural domains, F(1) containing the extramembraneous catalytic core and F(0) containing the membrane proton channel, linked together by a central stalk and a peripheral stalk. During catalysis, ATP synthesis in the catalytic domain of F(1) is coupled via a rotary mechanism of the central stalk subunits to proton translocation. Functionally, this protein is part of the stalk that links CF(0) to CF(1). It either transmits conformational changes from CF(0) to CF(1) or is implicated in proton conduction. The protein is ATP synthase subunit delta of Leuconostoc mesenteroides subsp. mesenteroides (strain ATCC 8293 / DSM 20343 / BCRC 11652 / CCM 1803 / JCM 6124 / NCDO 523 / NBRC 100496 / NCIMB 8023 / NCTC 12954 / NRRL B-1118 / 37Y).